The primary structure comprises 314 residues: Methionyl-tRNA formyltransferase (314 aa).

112-115 lines the (6S)-5,6,7,8-tetrahydrofolate pocket; it reads SLLP.

It belongs to the Fmt family.

It carries out the reaction L-methionyl-tRNA(fMet) + (6R)-10-formyltetrahydrofolate = N-formyl-L-methionyl-tRNA(fMet) + (6S)-5,6,7,8-tetrahydrofolate + H(+). Attaches a formyl group to the free amino group of methionyl-tRNA(fMet). The formyl group appears to play a dual role in the initiator identity of N-formylmethionyl-tRNA by promoting its recognition by IF2 and preventing the misappropriation of this tRNA by the elongation apparatus. The protein is Methionyl-tRNA formyltransferase of Buchnera aphidicola subsp. Schizaphis graminum (strain Sg).